The primary structure comprises 361 residues: DNA replication and repair protein RecF (361 aa).

30-37 (GANGSGKT) contacts ATP.

This sequence belongs to the RecF family.

Its subcellular location is the cytoplasm. In terms of biological role, the RecF protein is involved in DNA metabolism; it is required for DNA replication and normal SOS inducibility. RecF binds preferentially to single-stranded, linear DNA. It also seems to bind ATP. The protein is DNA replication and repair protein RecF of Glaesserella parasuis serovar 5 (strain SH0165) (Haemophilus parasuis).